The primary structure comprises 641 residues: 1-deoxy-D-xylulose-5-phosphate synthase (641 aa).

Residues histidine 79 and 120–122 each bind thiamine diphosphate; that span reads AHS. Aspartate 151 serves as a coordination point for Mg(2+). Residues 152–153, asparagine 180, tyrosine 290, and glutamate 372 contribute to the thiamine diphosphate site; that span reads GA. A Mg(2+)-binding site is contributed by asparagine 180.

Belongs to the transketolase family. DXPS subfamily. As to quaternary structure, homodimer. The cofactor is Mg(2+). Thiamine diphosphate is required as a cofactor.

The enzyme catalyses D-glyceraldehyde 3-phosphate + pyruvate + H(+) = 1-deoxy-D-xylulose 5-phosphate + CO2. It participates in metabolic intermediate biosynthesis; 1-deoxy-D-xylulose 5-phosphate biosynthesis; 1-deoxy-D-xylulose 5-phosphate from D-glyceraldehyde 3-phosphate and pyruvate: step 1/1. Catalyzes the acyloin condensation reaction between C atoms 2 and 3 of pyruvate and glyceraldehyde 3-phosphate to yield 1-deoxy-D-xylulose-5-phosphate (DXP). This chain is 1-deoxy-D-xylulose-5-phosphate synthase, found in Bradyrhizobium sp. (strain ORS 278).